A 448-amino-acid chain; its full sequence is Ribulose bisphosphate carboxylase large chain (448 aa).

Residue lysine 4 is modified to N6,N6,N6-trimethyllysine. Residues asparagine 113 and threonine 163 each coordinate substrate. Catalysis depends on lysine 165, which acts as the Proton acceptor. A substrate-binding site is contributed by lysine 167. Residues lysine 191, aspartate 193, and glutamate 194 each contribute to the Mg(2+) site. Lysine 191 is modified (N6-carboxylysine). Histidine 284 serves as the catalytic Proton acceptor. The substrate site is built by arginine 285, histidine 317, and serine 369.

It belongs to the RuBisCO large chain family. Type I subfamily. As to quaternary structure, heterohexadecamer of 8 large chains and 8 small chains; disulfide-linked. The disulfide link is formed within the large subunit homodimers. The cofactor is Mg(2+). The disulfide bond which can form in the large chain dimeric partners within the hexadecamer appears to be associated with oxidative stress and protein turnover.

It is found in the plastid. The protein localises to the chloroplast. It carries out the reaction 2 (2R)-3-phosphoglycerate + 2 H(+) = D-ribulose 1,5-bisphosphate + CO2 + H2O. The catalysed reaction is D-ribulose 1,5-bisphosphate + O2 = 2-phosphoglycolate + (2R)-3-phosphoglycerate + 2 H(+). Functionally, ruBisCO catalyzes two reactions: the carboxylation of D-ribulose 1,5-bisphosphate, the primary event in carbon dioxide fixation, as well as the oxidative fragmentation of the pentose substrate in the photorespiration process. Both reactions occur simultaneously and in competition at the same active site. This Eucryphia lucida (Leatherwood) protein is Ribulose bisphosphate carboxylase large chain.